A 430-amino-acid polypeptide reads, in one-letter code: Adenylosuccinate synthetase (430 aa).

GTP is bound by residues 12–18 (GDEGKGK) and 40–42 (GHT). D13 serves as the catalytic Proton acceptor. The Mg(2+) site is built by D13 and G40. IMP contacts are provided by residues 13-16 (DEGK), 38-41 (NAGH), T128, R142, Q223, T238, and R302. Residue H41 is the Proton donor of the active site. 298 to 304 (VNTGRKR) contributes to the substrate binding site. GTP is bound by residues R304, 330–332 (KLD), and 412–414 (GVG).

This sequence belongs to the adenylosuccinate synthetase family. Homodimer. The cofactor is Mg(2+).

It localises to the cytoplasm. It carries out the reaction IMP + L-aspartate + GTP = N(6)-(1,2-dicarboxyethyl)-AMP + GDP + phosphate + 2 H(+). It functions in the pathway purine metabolism; AMP biosynthesis via de novo pathway; AMP from IMP: step 1/2. Its function is as follows. Plays an important role in the de novo pathway of purine nucleotide biosynthesis. Catalyzes the first committed step in the biosynthesis of AMP from IMP. The sequence is that of Adenylosuccinate synthetase from Corynebacterium glutamicum (strain ATCC 13032 / DSM 20300 / JCM 1318 / BCRC 11384 / CCUG 27702 / LMG 3730 / NBRC 12168 / NCIMB 10025 / NRRL B-2784 / 534).